The chain runs to 688 residues: Glycine--tRNA ligase beta subunit (688 aa).

The protein belongs to the class-II aminoacyl-tRNA synthetase family. In terms of assembly, tetramer of two alpha and two beta subunits.

The protein localises to the cytoplasm. It catalyses the reaction tRNA(Gly) + glycine + ATP = glycyl-tRNA(Gly) + AMP + diphosphate. In Histophilus somni (strain 129Pt) (Haemophilus somnus), this protein is Glycine--tRNA ligase beta subunit.